Consider the following 200-residue polypeptide: Superoxide dismutase [Mn] 1 (200 aa).

Mn(2+) contacts are provided by H29, H76, D158, and H162.

This sequence belongs to the iron/manganese superoxide dismutase family. Mn(2+) serves as cofactor.

It carries out the reaction 2 superoxide + 2 H(+) = H2O2 + O2. Functionally, destroys superoxide anion radicals which are normally produced within the cells and which are toxic to biological systems. This is Superoxide dismutase [Mn] 1 (sod1) from Haloferax volcanii (strain ATCC 29605 / DSM 3757 / JCM 8879 / NBRC 14742 / NCIMB 2012 / VKM B-1768 / DS2) (Halobacterium volcanii).